The following is a 135-amino-acid chain: Large ribosomal subunit protein uL16c (135 aa).

It belongs to the universal ribosomal protein uL16 family. Part of the 50S ribosomal subunit.

The protein resides in the plastid. It is found in the chloroplast. The polypeptide is Large ribosomal subunit protein uL16c (Stigeoclonium helveticum (Green alga)).